The sequence spans 305 residues: Mitochondrial uncoupling protein 3 (305 aa).

3 Solcar repeats span residues 14-100 (TRIL…LKGL), 112-204 (LPLA…AKHF), and 213-299 (DNIF…FRLL). Helical transmembrane passes span 16-36 (ILLASLSAMVAESVTFPIDLT), 69-89 (VIGLYKGLSPAIIRHLFYTPI), 118-138 (ALVGGFSGVIAQVVASPADLV), 178-198 (KGVLPNIQRAFLVNMGELACY), 219-239 (TLASIMSGLASTSLSCPADVV), and 272-292 (WKGFFPTWARLGPWQFVFWVS).

This sequence belongs to the mitochondrial carrier (TC 2.A.29) family.

It localises to the mitochondrion inner membrane. In terms of biological role, PUMPS are mitochondrial transporter proteins that create proton leaks across the inner mitochondrial membrane, thus uncoupling oxidative phosphorylation. This leads to a decrease in the efficiency of oxidative phosphorylation and an increase in heat production. May be involved in protecting plant cells against oxidative stress damage. The protein is Mitochondrial uncoupling protein 3 (PUMP3) of Arabidopsis thaliana (Mouse-ear cress).